The primary structure comprises 165 residues: Crossover junction endodeoxyribonuclease RuvC (165 aa).

Active-site residues include aspartate 6, glutamate 67, and aspartate 142. Residues aspartate 6, glutamate 67, and aspartate 142 each coordinate Mg(2+).

Belongs to the RuvC family. Homodimer which binds Holliday junction (HJ) DNA. The HJ becomes 2-fold symmetrical on binding to RuvC with unstacked arms; it has a different conformation from HJ DNA in complex with RuvA. In the full resolvosome a probable DNA-RuvA(4)-RuvB(12)-RuvC(2) complex forms which resolves the HJ. Requires Mg(2+) as cofactor.

Its subcellular location is the cytoplasm. It carries out the reaction Endonucleolytic cleavage at a junction such as a reciprocal single-stranded crossover between two homologous DNA duplexes (Holliday junction).. Its function is as follows. The RuvA-RuvB-RuvC complex processes Holliday junction (HJ) DNA during genetic recombination and DNA repair. Endonuclease that resolves HJ intermediates. Cleaves cruciform DNA by making single-stranded nicks across the HJ at symmetrical positions within the homologous arms, yielding a 5'-phosphate and a 3'-hydroxyl group; requires a central core of homology in the junction. The consensus cleavage sequence is 5'-(A/T)TT(C/G)-3'. Cleavage occurs on the 3'-side of the TT dinucleotide at the point of strand exchange. HJ branch migration catalyzed by RuvA-RuvB allows RuvC to scan DNA until it finds its consensus sequence, where it cleaves and resolves the cruciform DNA. This Chlamydia abortus (strain DSM 27085 / S26/3) (Chlamydophila abortus) protein is Crossover junction endodeoxyribonuclease RuvC.